The primary structure comprises 247 residues: Adenosine 5'-phosphosulfate reductase (247 aa).

The [4Fe-4S] cluster site is built by Cys133, Cys134, Cys216, and Cys219. A disordered region spans residues 222–247; the sequence is KPAPGSDPRSGRWAGQAKTECGLHAS. The active-site Nucleophile; cysteine thiosulfonate intermediate is the Cys242.

It belongs to the PAPS reductase family. CysH subfamily. It depends on [4Fe-4S] cluster as a cofactor.

It localises to the cytoplasm. It catalyses the reaction [thioredoxin]-disulfide + sulfite + AMP + 2 H(+) = adenosine 5'-phosphosulfate + [thioredoxin]-dithiol. It functions in the pathway sulfur metabolism; hydrogen sulfide biosynthesis; sulfite from sulfate. Its function is as follows. Catalyzes the formation of sulfite from adenosine 5'-phosphosulfate (APS) using thioredoxin as an electron donor. This Rhodococcus opacus (strain B4) protein is Adenosine 5'-phosphosulfate reductase.